We begin with the raw amino-acid sequence, 1226 residues long: AF4/FMR2 family member 3 (1226 aa).

Basic and acidic residues predominate over residues 24 to 37; that stretch reads RNALRRKERERRNQ. Disordered regions lie at residues 24 to 65, 116 to 164, 197 to 299, 323 to 496, and 523 to 728; these read RNAL…GDEL, SRAQ…RATQ, ERPP…GETN, KVEP…SNQY, and IKST…SINA. Over residues 42–52 the composition is skewed to polar residues; the sequence is DDGTFNSSYSL. The span at 123–132 shows a compositional bias: low complexity; it reads SSICSTTTST. Composition is skewed to polar residues over residues 251-261 and 334-344; these read LKSSSETSVHC and KDSQLVSSGHN. Low complexity predominate over residues 381-392; the sequence is QQAAQRTALRAL. A compositionally biased stretch (polar residues) spans 396 to 408; it reads AVVQQPNCRTSVP. The segment covering 409–445 has biased composition (low complexity); that stretch reads SSKGSSSSSSSGSSSSSSDSESSSGSDSETESSSSES. A compositionally biased stretch (polar residues) spans 485–496; it reads QNESHGSESNQY. A compositionally biased stretch (basic and acidic residues) spans 523–533; that stretch reads IKSTCKEEQRP. Composition is skewed to low complexity over residues 550-561 and 569-579; these read PPAAVAVAVSAA and CAPAENAPAPA. Residues 589–607 show a composition bias toward basic and acidic residues; that stretch reads RRTERTSAGDGANCHRPEE. Residues 668 to 678 show a composition bias toward low complexity; the sequence is TESSSSSSSSD. Polar residues predominate over residues 692–705; it reads KAQTVAASASSGND. Position 755 is a phosphoserine (Ser755). 3 disordered regions span residues 783–856, 879–964, and 1100–1138; these read PQEP…LSAN, PISP…RDCK, and AAQA…SLSN. Residues 830–842 show a composition bias toward basic and acidic residues; that stretch reads REIKKSQGEKDSS. The segment covering 843–856 has biased composition (polar residues); that stretch reads SRLATSTSNTLSAN. A Phosphoserine modification is found at Ser881. Polar residues predominate over residues 894 to 909; that stretch reads EDLTSSSRPNGNSLFT.

It belongs to the AF4 family. Preferentially expressed in lymphoid tissues, highest levels being found in the thymus.

It localises to the nucleus. Functionally, putative transcription activator that may function in lymphoid development and oncogenesis. Binds, in vitro, to double-stranded DNA. The chain is AF4/FMR2 family member 3 from Homo sapiens (Human).